Consider the following 1397-residue polypeptide: DNA-directed RNA polymerase subunit beta' (1397 aa).

The Zn(2+) site is built by C75, C77, C90, and C93. Positions 465, 467, and 469 each coordinate Mg(2+). Residues C819, C893, C900, and C903 each contribute to the Zn(2+) site.

This sequence belongs to the RNA polymerase beta' chain family. As to quaternary structure, the RNAP catalytic core consists of 2 alpha, 1 beta, 1 beta' and 1 omega subunit. When a sigma factor is associated with the core the holoenzyme is formed, which can initiate transcription. Requires Mg(2+) as cofactor. It depends on Zn(2+) as a cofactor.

It catalyses the reaction RNA(n) + a ribonucleoside 5'-triphosphate = RNA(n+1) + diphosphate. DNA-dependent RNA polymerase catalyzes the transcription of DNA into RNA using the four ribonucleoside triphosphates as substrates. In Acinetobacter baumannii (strain ACICU), this protein is DNA-directed RNA polymerase subunit beta'.